A 345-amino-acid polypeptide reads, in one-letter code: tRNA N6-adenosine threonylcarbamoyltransferase (345 aa).

Residues H109 and H113 each coordinate Fe cation. Residues 136-140 (TVSGG), D169, G182, D186, and N284 each bind substrate. D312 serves as a coordination point for Fe cation.

This sequence belongs to the KAE1 / TsaD family. The cofactor is Fe(2+).

The protein localises to the cytoplasm. The catalysed reaction is L-threonylcarbamoyladenylate + adenosine(37) in tRNA = N(6)-L-threonylcarbamoyladenosine(37) in tRNA + AMP + H(+). In terms of biological role, required for the formation of a threonylcarbamoyl group on adenosine at position 37 (t(6)A37) in tRNAs that read codons beginning with adenine. Is involved in the transfer of the threonylcarbamoyl moiety of threonylcarbamoyl-AMP (TC-AMP) to the N6 group of A37, together with TsaE and TsaB. TsaD likely plays a direct catalytic role in this reaction. This Prosthecochloris aestuarii (strain DSM 271 / SK 413) protein is tRNA N6-adenosine threonylcarbamoyltransferase.